We begin with the raw amino-acid sequence, 445 residues long: Histamine H3 receptor (445 aa).

The Extracellular portion of the chain corresponds to 1 to 39 (MERAPPDGLMNASGTLAGEAAAAGGARGFSAAWTAVLAA). Asn11 carries an N-linked (GlcNAc...) asparagine glycan. The helical transmembrane segment at 40-60 (LMALLIVATVLGNALVMLAFV) threads the bilayer. At 61–70 (ADSSLRTQNN) the chain is on the cytoplasmic side. A helical transmembrane segment spans residues 71 to 91 (FFLLNLAISDFLVGAFCIPLY). Topologically, residues 92-108 (VPYVLTGRWTFGRGLCK) are extracellular. Cys107 and Cys188 are joined by a disulfide. Residues 109–129 (LWLVVDYLLCASSVFNIVLIS) traverse the membrane as a helical segment. Residues 130–156 (YDRFLSVTRAVSYRAQQGDTRRAVRKM) are Cytoplasmic-facing. The helical transmembrane segment at 157 to 177 (ALVWVLAFLLYGPAILSWEYL) threads the bilayer. Residues 178-196 (SGGSSIPEGHCYAEFFYNW) are Extracellular-facing. The chain crosses the membrane as a helical span at residues 197–217 (YFLITASTLEFFTPFLSVTFF). Residues 218–359 (NLSIYLNIQR…LSRDKKVAKS (142 aa)) are Cytoplasmic-facing. 2 disordered regions span residues 234 to 259 (DGGR…PSCW) and 286 to 336 (AGEA…LEKR). A compositionally biased stretch (pro residues) spans 241 to 256 (PEPPPDAQPSPPPAPP). Gly residues predominate over residues 290–299 (ALGGGSGGGA). A compositionally biased stretch (low complexity) spans 300 to 312 (AASPTSSSGSSSR). Residues 360-380 (LAIIVSIFGLCWAPYTLLMII) traverse the membrane as a helical segment. Residues 381–396 (RAACHGRCIPDYWYET) are Extracellular-facing. The helical transmembrane segment at 397–417 (SFWLLWANSAVNPVLYPLCHY) threads the bilayer. Residues 418–445 (SFRRAFTKLLCPQKLKVQPHGSLEQCWK) are Cytoplasmic-facing. Ser439 carries the post-translational modification Phosphoserine.

It belongs to the G-protein coupled receptor 1 family. As to expression, expressed abundantly in brain, most notably throughout the thalamus, the ventromedial hypothalamus and the caudate nucleus. Isoform 1 is largely predominant in all tissues.

Its subcellular location is the cell membrane. Functionally, the H3 subclass of histamine receptors could mediate the histamine signals in CNS and peripheral nervous system. Signals through the inhibition of adenylate cyclase and displays high constitutive activity (spontaneous activity in the absence of agonist). The protein is Histamine H3 receptor (Hrh3) of Rattus norvegicus (Rat).